Consider the following 209-residue polypeptide: Ribosomal RNA large subunit methyltransferase E (209 aa).

S-adenosyl-L-methionine is bound by residues Gly63, Trp65, Asp83, Asp99, and Asp124. Catalysis depends on Lys164, which acts as the Proton acceptor.

The protein belongs to the class I-like SAM-binding methyltransferase superfamily. RNA methyltransferase RlmE family.

Its subcellular location is the cytoplasm. The catalysed reaction is uridine(2552) in 23S rRNA + S-adenosyl-L-methionine = 2'-O-methyluridine(2552) in 23S rRNA + S-adenosyl-L-homocysteine + H(+). Its function is as follows. Specifically methylates the uridine in position 2552 of 23S rRNA at the 2'-O position of the ribose in the fully assembled 50S ribosomal subunit. This is Ribosomal RNA large subunit methyltransferase E from Pseudoalteromonas atlantica (strain T6c / ATCC BAA-1087).